The chain runs to 598 residues: uncharacterized protein (598 aa).

An ABC transmembrane type-1 domain is found at 39 to 322; the sequence is LIMVFVFVTV…LSNQFNMIQM (284 aa). Transmembrane regions (helical) follow at residues 40 to 60, 80 to 100, 150 to 170, 177 to 197, and 273 to 293; these read IMVF…PYLI, MLIL…QGKI, VLGN…GAVI, VILS…TQIV, and LGFA…IITV. Positions 355-589 constitute an ABC transporter domain; it reads IEFKNVWFSY…RGFYYELFTS (235 aa). 388 to 395 is a binding site for ATP; it reads GPTGSGKT.

Belongs to the ABC transporter superfamily.

It is found in the cell membrane. This is an uncharacterized protein from Thermotoga maritima (strain ATCC 43589 / DSM 3109 / JCM 10099 / NBRC 100826 / MSB8).